A 176-amino-acid polypeptide reads, in one-letter code: Adipose-secreted signaling protein (176 aa).

The disordered stretch occupies residues 1–30; that stretch reads MATAGKGSKGKGTGVRFTPEGTQGHPQEGT. Residues 20–30 show a composition bias toward polar residues; it reads EGTQGHPQEGT.

Belongs to the ADISSP family.

Functionally, may be involved in thermogenesis and glucose homeostasis. This Taeniopygia guttata (Zebra finch) protein is Adipose-secreted signaling protein.